The chain runs to 295 residues: Acetyl-coenzyme A carboxylase carboxyl transferase subunit beta (295 aa).

The interval 1–20 (MSWLSKLMPSGIRTENTPAK) is disordered. The region spanning 28–295 (LWEKCSNCGS…QPHPQDADAA (268 aa)) is the CoA carboxyltransferase N-terminal domain. Zn(2+)-binding residues include Cys32, Cys35, Cys51, and Cys54. The C4-type zinc finger occupies 32–54 (CSNCGSALYGPELEENLEVCPKC).

The protein belongs to the AccD/PCCB family. In terms of assembly, acetyl-CoA carboxylase is a heterohexamer composed of biotin carboxyl carrier protein (AccB), biotin carboxylase (AccC) and two subunits each of ACCase subunit alpha (AccA) and ACCase subunit beta (AccD). It depends on Zn(2+) as a cofactor.

The protein resides in the cytoplasm. It carries out the reaction N(6)-carboxybiotinyl-L-lysyl-[protein] + acetyl-CoA = N(6)-biotinyl-L-lysyl-[protein] + malonyl-CoA. Its pathway is lipid metabolism; malonyl-CoA biosynthesis; malonyl-CoA from acetyl-CoA: step 1/1. In terms of biological role, component of the acetyl coenzyme A carboxylase (ACC) complex. Biotin carboxylase (BC) catalyzes the carboxylation of biotin on its carrier protein (BCCP) and then the CO(2) group is transferred by the transcarboxylase to acetyl-CoA to form malonyl-CoA. The chain is Acetyl-coenzyme A carboxylase carboxyl transferase subunit beta from Xanthomonas oryzae pv. oryzae (strain MAFF 311018).